Consider the following 324-residue polypeptide: Polyprenol dehydrogenase (324 aa).

Y206 serves as the catalytic Proton acceptor. Y206, K210, and T243 together coordinate NAD(+).

It belongs to the short-chain dehydrogenases/reductases (SDR) family.

Its subcellular location is the lipid droplet. It carries out the reaction a di-trans,poly-cis-polyprenol + NAD(+) = a di-trans,poly-cis-polyprenal + NADH + H(+). The enzyme catalyses a di-trans,poly-cis-polyprenol + NADP(+) = a di-trans,poly-cis-polyprenal + NADPH + H(+). The catalysed reaction is a di-trans,poly-cis-dolichol + NADP(+) = a di-trans,poly-cis-dolichal + NADPH + H(+). It catalyses the reaction a di-trans,poly-cis-dolichol + NAD(+) = a di-trans,poly-cis-dolichal + NADH + H(+). It participates in protein modification; protein glycosylation. In terms of biological role, oxidoreductase that plays a key role in early steps of protein N-linked glycosylation by mediating two non-consecutive steps in dolichol biosynthesis. Acts both as a NAD(+)-dependent dehydrogenase and as a NADPH-dependent reductase during the conversion of polyprenol into dolichol. First catalyzes the NAD(+)-dependent dehydrogenation of polyprenol into polyprenal; polyprenal is then reduced into dolichal by srd5a3. It then catalyzes the NADPH-dependent reduction of dolichal into dolichol. The chain is Polyprenol dehydrogenase from Danio rerio (Zebrafish).